Reading from the N-terminus, the 240-residue chain is Phosphatidylserine decarboxylase proenzyme (240 aa).

Ser-209 serves as the catalytic Schiff-base intermediate with substrate; via pyruvic acid. Position 209 is a pyruvic acid (Ser); by autocatalysis (Ser-209).

It belongs to the phosphatidylserine decarboxylase family. PSD-A subfamily. In terms of assembly, heterodimer of a large membrane-associated beta subunit and a small pyruvoyl-containing alpha subunit. It depends on pyruvate as a cofactor. Post-translationally, is synthesized initially as an inactive proenzyme. Formation of the active enzyme involves a self-maturation process in which the active site pyruvoyl group is generated from an internal serine residue via an autocatalytic post-translational modification. Two non-identical subunits are generated from the proenzyme in this reaction, and the pyruvate is formed at the N-terminus of the alpha chain, which is derived from the carboxyl end of the proenzyme. The post-translation cleavage follows an unusual pathway, termed non-hydrolytic serinolysis, in which the side chain hydroxyl group of the serine supplies its oxygen atom to form the C-terminus of the beta chain, while the remainder of the serine residue undergoes an oxidative deamination to produce ammonia and the pyruvoyl prosthetic group on the alpha chain.

It is found in the cell membrane. It catalyses the reaction a 1,2-diacyl-sn-glycero-3-phospho-L-serine + H(+) = a 1,2-diacyl-sn-glycero-3-phosphoethanolamine + CO2. It participates in phospholipid metabolism; phosphatidylethanolamine biosynthesis; phosphatidylethanolamine from CDP-diacylglycerol: step 2/2. Its function is as follows. Catalyzes the formation of phosphatidylethanolamine (PtdEtn) from phosphatidylserine (PtdSer). The chain is Phosphatidylserine decarboxylase proenzyme from Mycobacterium ulcerans (strain Agy99).